We begin with the raw amino-acid sequence, 431 residues long: tRNA(Ile)-lysidine synthase (431 aa).

19-24 (STGIDS) contributes to the ATP binding site.

Belongs to the tRNA(Ile)-lysidine synthase family.

Its subcellular location is the cytoplasm. The catalysed reaction is cytidine(34) in tRNA(Ile2) + L-lysine + ATP = lysidine(34) in tRNA(Ile2) + AMP + diphosphate + H(+). Its function is as follows. Ligates lysine onto the cytidine present at position 34 of the AUA codon-specific tRNA(Ile) that contains the anticodon CAU, in an ATP-dependent manner. Cytidine is converted to lysidine, thus changing the amino acid specificity of the tRNA from methionine to isoleucine. This chain is tRNA(Ile)-lysidine synthase, found in Staphylococcus aureus (strain MRSA252).